We begin with the raw amino-acid sequence, 182 residues long: Ribosome-recycling factor (182 aa).

Belongs to the RRF family.

The protein localises to the cytoplasm. Responsible for the release of ribosomes from messenger RNA at the termination of protein biosynthesis. May increase the efficiency of translation by recycling ribosomes from one round of translation to another. In Gloeothece citriformis (strain PCC 7424) (Cyanothece sp. (strain PCC 7424)), this protein is Ribosome-recycling factor.